Here is a 54-residue protein sequence, read N- to C-terminus: uncharacterized protein (54 aa).

The tract at residues methionine 1 to serine 38 is disordered. Low complexity predominate over residues proline 17–serine 38.

This is an uncharacterized protein from Dictyostelium discoideum (Social amoeba).